The sequence spans 1091 residues: Ninein homolog (1091 aa).

The tract at residues 1 to 361 (MEVSADPYEQ…AVEVDERHAS (361 aa)) is sufficient for binding to microtubules. Disordered regions lie at residues 100–216 (YIES…TTSP), 456–483 (AQTSSSIGGTPEHSPLRPRRHSEDKEEE), 525–602 (KAKK…EELT), and 616–639 (KAAKEGRSLTPESRSKELETSLEQ). 5 positions are modified to phosphoserine: Ser-103, Ser-107, Ser-108, Ser-113, and Ser-141. Thr-144 is subject to Phosphothreonine. Polar residues predominate over residues 168 to 177 (VQRSSSQSDL). The tract at residues 487–526 (LMEKLAALQMENAQLRDKTDELTIEIESLNVELIRSKTKA) is sufficient for interaction with ens. Basic and acidic residues-rich tracts occupy residues 527-537 (KKQEKQEKQED) and 547-563 (RRGDSPSKTHLTEESPR). A Phosphoserine modification is found at Ser-594. Over residues 616 to 634 (KAAKEGRSLTPESRSKELE) the composition is skewed to basic and acidic residues. Phosphoserine is present on residues Ser-701 and Ser-714. Residues 799–919 (AKSLADSKDE…TSCLSHEKCS (121 aa)) are disordered. Over residues 822–845 (SHKTASRNNLTTSETSIFSTTPFE) the composition is skewed to polar residues. Positions 846–860 (SSQSGPSPTNSGNSN) are enriched in low complexity. Residues 894 to 913 (ETSSTASGKSFESNSKTSCL) are compositionally biased toward polar residues.

In terms of assembly, interacts with ens.

It is found in the cytoplasm. The protein localises to the cytoskeleton. It localises to the microtubule organizing center. Its subcellular location is the centrosome. The protein resides in the perinuclear region. Required for the positioning and anchorage of the microtubule minus-ends in various cells. In fat body cells, part of perinuclear non-centrosomal microtubule-organizing centers (ncMTOCs) which function to accommodate the organization of microtubule (MT) networks to control nuclear positioning and dynein motor-based retrograde endosomal trafficking. Within the ncMTOCs, Msp300 and shot anchors the ncMTOC at the nuclear surface and recruits the MT minus-end regulators Patronin and Nin for assembly, anchoring and/or stabilization of circumferential and radial MTs at the ncMTOC. This protein may also function with Patronin to recruit msps to the ncMTOC for the gamma-tubulin-independent elongation of radial MTs. In embryonic myotubes and larval myofibers, functions with ens to regulate myonuclear positioning and, as a consequence, is involved in muscle development. Likely functions by positively regulating ens. Essential for embryogenesis, likely by contributing to accurate chromosome segregation during early embryonic nuclear divisions. However, other reports found that it is not essential for embryogenesis or embryonic cellular divisions. This chain is Ninein homolog, found in Drosophila melanogaster (Fruit fly).